The primary structure comprises 384 residues: Chaperone protein DnaJ 1 (384 aa).

Residues 4 to 68 (DYYGLLGVAR…EKRRIVDMGG (65 aa)) form the J domain. A CR-type zinc finger spans residues 133–215 (GVTKHLTVDT…CGGDGRVRAR (83 aa)). Positions 146, 149, 163, 166, 189, 192, 203, and 206 each coordinate Zn(2+). CXXCXGXG motif repeat units follow at residues 146–153 (CDACHGSG), 163–170 (CETCGGAG), 189–196 (CPTCRGAG), and 203–210 (CHKCGGDG).

Belongs to the DnaJ family. As to quaternary structure, homodimer. It depends on Zn(2+) as a cofactor.

It localises to the cytoplasm. Functionally, participates actively in the response to hyperosmotic and heat shock by preventing the aggregation of stress-denatured proteins and by disaggregating proteins, also in an autonomous, DnaK-independent fashion. Unfolded proteins bind initially to DnaJ; upon interaction with the DnaJ-bound protein, DnaK hydrolyzes its bound ATP, resulting in the formation of a stable complex. GrpE releases ADP from DnaK; ATP binding to DnaK triggers the release of the substrate protein, thus completing the reaction cycle. Several rounds of ATP-dependent interactions between DnaJ, DnaK and GrpE are required for fully efficient folding. Also involved, together with DnaK and GrpE, in the DNA replication of plasmids through activation of initiation proteins. The chain is Chaperone protein DnaJ 1 from Nocardia farcinica (strain IFM 10152).